The following is a 175-amino-acid chain: UPF0178 protein GOX1710 (175 aa).

This sequence belongs to the UPF0178 family.

The polypeptide is UPF0178 protein GOX1710 (Gluconobacter oxydans (strain 621H) (Gluconobacter suboxydans)).